A 252-amino-acid chain; its full sequence is tRNA (guanine-N(1)-)-methyltransferase (252 aa).

Residues Gly-113 and 133-138 each bind S-adenosyl-L-methionine; that span reads IGDYVL.

Belongs to the RNA methyltransferase TrmD family. In terms of assembly, homodimer.

The protein resides in the cytoplasm. The enzyme catalyses guanosine(37) in tRNA + S-adenosyl-L-methionine = N(1)-methylguanosine(37) in tRNA + S-adenosyl-L-homocysteine + H(+). Specifically methylates guanosine-37 in various tRNAs. The chain is tRNA (guanine-N(1)-)-methyltransferase from Xanthomonas campestris pv. campestris (strain 8004).